Here is a 503-residue protein sequence, read N- to C-terminus: Maturase K (503 aa).

The protein belongs to the intron maturase 2 family. MatK subfamily.

The protein localises to the plastid. It localises to the chloroplast. Usually encoded in the trnK tRNA gene intron. Probably assists in splicing its own and other chloroplast group II introns. The protein is Maturase K of Rosa gigantea (Giant tea rose).